We begin with the raw amino-acid sequence, 468 residues long: Acetyl-CoA decarbonylase/synthase complex subunit gamma (468 aa).

A 4Fe-4S domain is found at Met-1–Asp-60. The [4Fe-4S] cluster site is built by Cys-18, Cys-21, Cys-26, and Cys-43.

In terms of assembly, heterodimer of delta and gamma chains. The ACDS complex is made up of alpha, epsilon, beta, gamma and delta chains with a probable stoichiometry of (alpha(2)epsilon(2))(4)-beta(8)-(gamma(1)delta(1))(8). Corrinoid serves as cofactor. It depends on [4Fe-4S] cluster as a cofactor.

The catalysed reaction is 5,6,7,8-tetrahydrosarcinapterin + methyl-Co(III)-[corrinoid Fe-S protein] = 5-methyltetrahydrosarcinapterin + Co(I)-[corrinoid Fe-S protein] + H(+). It participates in one-carbon metabolism; methanogenesis from acetate. Functionally, part of a complex that catalyzes the reversible cleavage of acetyl-CoA, allowing growth on acetate as sole source of carbon and energy. The sequence is that of Acetyl-CoA decarbonylase/synthase complex subunit gamma from Methanosarcina acetivorans (strain ATCC 35395 / DSM 2834 / JCM 12185 / C2A).